Consider the following 904-residue polypeptide: DNA mismatch repair protein MutS (904 aa).

654-661 (GPNMAGKS) provides a ligand contact to ATP.

The protein belongs to the DNA mismatch repair MutS family.

Its function is as follows. This protein is involved in the repair of mismatches in DNA. It is possible that it carries out the mismatch recognition step. This protein has a weak ATPase activity. The protein is DNA mismatch repair protein MutS of Caulobacter sp. (strain K31).